Here is a 312-residue protein sequence, read N- to C-terminus: tRNA dimethylallyltransferase (312 aa).

17–24 (GPTASGKT) is an ATP binding site. 19-24 (TASGKT) contributes to the substrate binding site. 3 interaction with substrate tRNA regions span residues 42–45 (DSAL), 166–170 (QRLLR), and 247–252 (RCVGYR).

It belongs to the IPP transferase family. In terms of assembly, monomer. Requires Mg(2+) as cofactor.

The catalysed reaction is adenosine(37) in tRNA + dimethylallyl diphosphate = N(6)-dimethylallyladenosine(37) in tRNA + diphosphate. In terms of biological role, catalyzes the transfer of a dimethylallyl group onto the adenine at position 37 in tRNAs that read codons beginning with uridine, leading to the formation of N6-(dimethylallyl)adenosine (i(6)A). The polypeptide is tRNA dimethylallyltransferase (Sodalis glossinidius (strain morsitans)).